The following is a 358-amino-acid chain: 4-hydroxy-3-methylbut-2-en-1-yl diphosphate synthase (flavodoxin) (358 aa).

The [4Fe-4S] cluster site is built by Cys264, Cys267, Cys299, and Glu306.

Belongs to the IspG family. It depends on [4Fe-4S] cluster as a cofactor.

The catalysed reaction is (2E)-4-hydroxy-3-methylbut-2-enyl diphosphate + oxidized [flavodoxin] + H2O + 2 H(+) = 2-C-methyl-D-erythritol 2,4-cyclic diphosphate + reduced [flavodoxin]. The protein operates within isoprenoid biosynthesis; isopentenyl diphosphate biosynthesis via DXP pathway; isopentenyl diphosphate from 1-deoxy-D-xylulose 5-phosphate: step 5/6. Its function is as follows. Converts 2C-methyl-D-erythritol 2,4-cyclodiphosphate (ME-2,4cPP) into 1-hydroxy-2-methyl-2-(E)-butenyl 4-diphosphate. This Helicobacter acinonychis (strain Sheeba) protein is 4-hydroxy-3-methylbut-2-en-1-yl diphosphate synthase (flavodoxin).